The primary structure comprises 501 residues: Pre-mRNA-splicing factor 38B (501 aa).

Over residues methionine 1–glutamine 11 the composition is skewed to low complexity. Disordered regions lie at residues methionine 1–tryptophan 28 and aspartate 208–proline 501. A compositionally biased stretch (basic residues) spans glycine 243–arginine 273. A coiled-coil region spans residues glutamate 281 to arginine 302. Residues glutamate 281–arginine 328 show a composition bias toward basic and acidic residues. Over residues arginine 329–serine 341 the composition is skewed to basic residues. The span at threonine 342–arginine 408 shows a compositional bias: basic and acidic residues. The span at serine 409–serine 435 shows a compositional bias: basic residues. A compositionally biased stretch (basic and acidic residues) spans serine 437–arginine 447. Positions lysine 448 to serine 468 are enriched in basic residues. Residues histidine 469–glutamate 491 show a composition bias toward basic and acidic residues. The span at arginine 492–proline 501 shows a compositional bias: polar residues.

It belongs to the PRP38 family.

Its subcellular location is the nucleus. Its function is as follows. May be required for pre-mRNA splicing. The protein is Pre-mRNA-splicing factor 38B (prpf38b) of Danio rerio (Zebrafish).